Here is a 213-residue protein sequence, read N- to C-terminus: Glutathione S-transferase PARB (213 aa).

Residues 1 to 82 enclose the GST N-terminal domain; the sequence is MAIKVHGSPM…YIAHVYADNG (82 aa). Residues Ser11, 12–13, 40–41, 53–54, and 66–67 contribute to the glutathione site; these read TA, HK, QV, and ES. One can recognise a GST C-terminal domain in the interval 89-213; that stretch reads DPKKMPSMSV…WVKGLEKLQK (125 aa).

Belongs to the GST superfamily. Phi family.

The catalysed reaction is RX + glutathione = an S-substituted glutathione + a halide anion + H(+). In terms of biological role, conjugation of reduced glutathione to a wide number of exogenous and endogenous hydrophobic electrophiles. This chain is Glutathione S-transferase PARB, found in Nicotiana tabacum (Common tobacco).